The sequence spans 505 residues: Putative pentatricopeptide repeat-containing protein At1g26500 (505 aa).

7 PPR repeats span residues 145–179, 180–210, 214–248, 249–279, 285–319, 320–350, and 351–385; these read NDKTFRIVLKTLASARELKKCVNYFHLMNGFGYLY, NVETMNRGVETLCKEKLVEEAKFVFIKLKEF, DEITYRTMIQGFCDVGDLIEAAKLWNLMMDEGFDV, DIEAGKKIMETLLKKNQFDEASKVFYVMVSK, DGGFYRVMIDWLCKNGRIDMARKVFDEMRERGVYV, DNLTWASLIYGLLVKRRVVEAYGLVEGVENP, and DISIYHGLIKGLVKIKRASEATEVFRKMIQRGCEP.

It belongs to the PPR family. P subfamily.

The sequence is that of Putative pentatricopeptide repeat-containing protein At1g26500 from Arabidopsis thaliana (Mouse-ear cress).